Consider the following 421-residue polypeptide: Putative bifunctional polynucleotide phosphatase/kinase (421 aa).

Positions 25 to 231 (DSYLKGIINN…SENLKTNYKL (207 aa)) are phosphatase. The segment at 235–415 (NPTEIIDEIE…DDPKWKRSFM (181 aa)) is kinase. Residue 265–272 (GQPGSGKS) coordinates ATP.

In the N-terminal section; belongs to the DNA 3' phosphatase family.

It catalyses the reaction a 3'end (2'-deoxyribonucleotide 3'-phosphate)-DNA + H2O = a 3'-end 2'-deoxyribonucleotide-DNA + phosphate. It carries out the reaction a 5'-end dephospho-2'-deoxyribonucleoside-DNA + ATP = a 5'-end 5'-phospho-2'-deoxyribonucleoside-DNA + ADP + H(+). The chain is Putative bifunctional polynucleotide phosphatase/kinase from Acanthamoeba polyphaga mimivirus (APMV).